A 257-amino-acid polypeptide reads, in one-letter code: MRVDVVSIFPEYFAPLDLSLIGRARASGTLQLAVHDLRTWTHDVHRTVDDTPYGGGPGMVMRPEPWGEALEALAPPGGNPPRLLVPTPAGAPFTQALAHELAAEPHLLFACGRYEGIDQRVLEHAASRMPVTEVSLGDYVLFGGEVAVLVILEAVTRLLPGVLGNVGSLDDESHAHGLLEAPMYTKPAVWRGQEVPTVLRSGDHGKIARWRRDEALARTVARRPDMIAALPPECLDPRDRAALERAGFPDPPEGVAK.

S-adenosyl-L-methionine-binding positions include glycine 112 and 136-141 (LGDYVL).

This sequence belongs to the RNA methyltransferase TrmD family. As to quaternary structure, homodimer.

The protein localises to the cytoplasm. It carries out the reaction guanosine(37) in tRNA + S-adenosyl-L-methionine = N(1)-methylguanosine(37) in tRNA + S-adenosyl-L-homocysteine + H(+). Functionally, specifically methylates guanosine-37 in various tRNAs. This chain is tRNA (guanine-N(1)-)-methyltransferase, found in Salinispora tropica (strain ATCC BAA-916 / DSM 44818 / JCM 13857 / NBRC 105044 / CNB-440).